A 411-amino-acid chain; its full sequence is Multidrug resistance protein MdtG (411 aa).

The next 10 helical transmembrane spans lie at 14–34 (LFVA…IMPF), 56–76 (LVFS…GGLA), 89–109 (ALGM…WQFL), 113–133 (AVLG…ATQV), 144–164 (TLST…GLLA), 171–191 (PVFY…LLYV), 219–239 (ILSL…IAPI), 254–274 (LAFV…MSAP), 288–308 (ILVF…FVQT), and 376–396 (AVFC…WWCL).

Belongs to the major facilitator superfamily. DHA1 family. MdtG (TC 2.A.1.2.20) subfamily.

It is found in the cell inner membrane. This chain is Multidrug resistance protein MdtG, found in Serratia proteamaculans (strain 568).